The following is a 130-amino-acid chain: Phosphoribosyl-AMP cyclohydrolase (130 aa).

Position 74 (Asp-74) interacts with Mg(2+). Position 75 (Cys-75) interacts with Zn(2+). 2 residues coordinate Mg(2+): Asp-76 and Asp-78. Zn(2+) is bound by residues Cys-91 and Cys-98.

Belongs to the PRA-CH family. Homodimer. It depends on Mg(2+) as a cofactor. Zn(2+) is required as a cofactor.

It localises to the cytoplasm. It catalyses the reaction 1-(5-phospho-beta-D-ribosyl)-5'-AMP + H2O = 1-(5-phospho-beta-D-ribosyl)-5-[(5-phospho-beta-D-ribosylamino)methylideneamino]imidazole-4-carboxamide. It functions in the pathway amino-acid biosynthesis; L-histidine biosynthesis; L-histidine from 5-phospho-alpha-D-ribose 1-diphosphate: step 3/9. In terms of biological role, catalyzes the hydrolysis of the adenine ring of phosphoribosyl-AMP. In Bradyrhizobium sp. (strain ORS 278), this protein is Phosphoribosyl-AMP cyclohydrolase.